Consider the following 307-residue polypeptide: Malate dehydrogenase (307 aa).

Residues 8 to 13 and Asp32 each bind NAD(+); that span reads GAGNVG. Positions 81 and 87 each coordinate substrate. NAD(+) contacts are provided by residues Asn94 and 117–119; that span reads VSN. Substrate is bound by residues Asn119 and Arg150. His174 serves as the catalytic Proton acceptor.

It belongs to the LDH/MDH superfamily. MDH type 3 family.

The catalysed reaction is (S)-malate + NAD(+) = oxaloacetate + NADH + H(+). In terms of biological role, catalyzes the reversible oxidation of malate to oxaloacetate. This is Malate dehydrogenase from Dehalococcoides mccartyi (strain ATCC BAA-2266 / KCTC 15142 / 195) (Dehalococcoides ethenogenes (strain 195)).